The primary structure comprises 249 residues: 2,3-bisphosphoglycerate-dependent phosphoglycerate mutase (249 aa).

Residues Arg-8–Asn-15, Thr-21–Gly-22, Arg-60, Glu-87–Tyr-90, Lys-98, Arg-114–Arg-115, and Gly-183–Asn-184 each bind substrate. His-9 acts as the Tele-phosphohistidine intermediate in catalysis. Glu-87 (proton donor/acceptor) is an active-site residue.

It belongs to the phosphoglycerate mutase family. BPG-dependent PGAM subfamily. Homodimer.

It carries out the reaction (2R)-2-phosphoglycerate = (2R)-3-phosphoglycerate. It participates in carbohydrate degradation; glycolysis; pyruvate from D-glyceraldehyde 3-phosphate: step 3/5. Functionally, catalyzes the interconversion of 2-phosphoglycerate and 3-phosphoglycerate. The sequence is that of 2,3-bisphosphoglycerate-dependent phosphoglycerate mutase from Azoarcus sp. (strain BH72).